Here is a 392-residue protein sequence, read N- to C-terminus: MDFPGSAPSVGIEWEVALVDPETRDLVPRAAELIARMDEVHPGHKVVREFLANTVEMVSGVHDTIPEAVEDLHVQAKQLMECADDIGVNLFSAGTHPFAHWGDQKLSEKGSYQEIIERTQYWGRQMLIWGIHVHVGVGSKEKVWPIINALMTHYPHILAMSASSPAWEGLDTGYSSNRTLLYQQLPTAGMPYQFENWEQWEEFNRDQDLSGVINHTGSMHFDVRPTKYGTVETRFADATMELWELAAIAAYTHCLVVYFERRLDAGHELPTLQPWHVAENKWRAARYGLDALIITDRETNEALVTDELDAWVDRLAPLSEELGCAAELQDVRKLIARGGDYALQRAAARKHGAAPEPGTRTRGDDGVEGGFTQPEAWIAAVDLTVDSLRKSL.

The tract at residues 347 to 367 is disordered; it reads AARKHGAAPEPGTRTRGDDGV.

Belongs to the glutamate--cysteine ligase type 2 family. YbdK subfamily.

It carries out the reaction L-cysteine + L-glutamate + ATP = gamma-L-glutamyl-L-cysteine + ADP + phosphate + H(+). Functionally, ATP-dependent carboxylate-amine ligase which exhibits weak glutamate--cysteine ligase activity. This Corynebacterium jeikeium (strain K411) protein is Putative glutamate--cysteine ligase 2.